The primary structure comprises 181 residues: CD160 antigen (181 aa).

The first 24 residues, 1–24 (MLLEPGRGCCALAILLAIVDIQSG), serve as a signal peptide directing secretion. Positions 25–133 (GCINITSSAS…QGHFFSILFT (109 aa)) constitute an Ig-like V-type domain. The N-linked (GlcNAc...) asparagine glycan is linked to Asn-28. Intrachain disulfides connect Cys-44–Cys-112 and Cys-61–Cys-68. N-linked (GlcNAc...) asparagine glycosylation occurs at Asn-137. The GPI-anchor amidated serine moiety is linked to residue Ser-159. Residues 160–181 (SGFLQEKVWVMLVTSLVALQAL) constitute a propeptide, removed in mature form.

As to quaternary structure, homomultimer; disulfide-linked. Interacts with HLA-G. Interacts with HLA-A2-B2M in complex with an HIV-derived peptide. Interacts with TNFRSF14 (via cysteine-rich domain 1); this interaction is direct. Interacts with LCK and CD247/CD3 zeta chain. In terms of tissue distribution, expression is restricted to functional NK and cytotoxic T lymphocytes. Expressed in viral-specific effector memory and terminally differentiated effector memory CD8+ T cells. Expressed in memory and activated CD4+ T cell subsets (at protein level). Expressed at high levels in intraepithelial lymphocytes (at protein level). Expressed in both alpha-beta and gamma-delta CD8+ T cell subsets (at protein level). Expressed in umbilical vein endothelial cells (at protein level). Expressed in monocytes and at lower levels in B cells. Isoform 3: Expressed exclusively in activated NK cells (at protein level).

It is found in the cell membrane. The protein resides in the secreted. Receptor on immune cells capable to deliver stimulatory or inhibitory signals that regulate cell activation and differentiation. Exists as a GPI-anchored and as a transmembrane form, each likely initiating distinct signaling pathways via phosphoinositol 3-kinase in activated NK cells and via LCK and CD247/CD3 zeta chain in activated T cells. Receptor for both classical and non-classical MHC class I molecules. In the context of acute viral infection, recognizes HLA-C and triggers NK cell cytotoxic activity, likely playing a role in anti-viral innate immune response. On CD8+ T cells, binds HLA-A2-B2M in complex with a viral peptide and provides a costimulatory signal to activated/memory T cells. Upon persistent antigen stimulation, such as occurs during chronic viral infection, may progressively inhibit TCR signaling in memory CD8+ T cells, contributing to T cell exhaustion. On endothelial cells, recognizes HLA-G and controls angiogenesis in immune privileged sites. Receptor or ligand for TNF superfamily member TNFRSF14, participating in bidirectional cell-cell contact signaling between antigen presenting cells and lymphocytes. Upon ligation of TNFRSF14, provides stimulatory signal to NK cells enhancing IFNG production and anti-tumor immune response. On activated CD4+ T cells, interacts with TNFRSF14 and down-regulates CD28 costimulatory signaling, restricting memory and alloantigen-specific immune response. In the context of bacterial infection, acts as a ligand for TNFRSF14 on epithelial cells, triggering the production of antimicrobial proteins and pro-inflammatory cytokines. Functionally, the soluble GPI-cleaved form, usually released by activated lymphocytes, might play an immune regulatory role by limiting lymphocyte effector functions. This chain is CD160 antigen, found in Homo sapiens (Human).